Reading from the N-terminus, the 291-residue chain is MLPPLPIPPDRPVLIAGPTASGKSALAAEIVGRDGGVVVNADALQVYDCWRILSARPSVAEEAALPHRLYGHVPRRGIYSAGHWLKEVEAVLREGLRPVIVGGTGLYFSSLTNGLADIPHTPPEMRHEADAFLARAGLSAMVADLDPATAGRIDLRNPARVQRAWEVLRATGRGLADWQAATGAPLLPLAETVALVLRPDRDWLAERIDRRFDLMIEAGALEEARVALADWDPALPSSRAIGAPELVAHLKGERTLDEAIAAAKLASRQYAKRQRTWFRNRMRDWREIRLP.

G17–S24 serves as a coordination point for ATP. T19–S24 provides a ligand contact to substrate.

This sequence belongs to the IPP transferase family. Monomer. It depends on Mg(2+) as a cofactor.

The catalysed reaction is adenosine(37) in tRNA + dimethylallyl diphosphate = N(6)-dimethylallyladenosine(37) in tRNA + diphosphate. In terms of biological role, catalyzes the transfer of a dimethylallyl group onto the adenine at position 37 in tRNAs that read codons beginning with uridine, leading to the formation of N6-(dimethylallyl)adenosine (i(6)A). This Cereibacter sphaeroides (strain ATCC 17025 / ATH 2.4.3) (Rhodobacter sphaeroides) protein is tRNA dimethylallyltransferase.